The sequence spans 131 residues: Large ribosomal subunit protein uL24 (131 aa).

Belongs to the universal ribosomal protein uL24 family. As to quaternary structure, part of the 50S ribosomal subunit.

One of two assembly initiator proteins, it binds directly to the 5'-end of the 23S rRNA, where it nucleates assembly of the 50S subunit. In terms of biological role, located at the polypeptide exit tunnel on the outside of the subunit. In Korarchaeum cryptofilum (strain OPF8), this protein is Large ribosomal subunit protein uL24.